A 107-amino-acid chain; its full sequence is High mobility group protein HMG-I/HMG-Y (107 aa).

Residues 1–13 (MSESGSKSSQPLA) are compositionally biased toward polar residues. A disordered region spans residues 1-107 (MSESGSKSSQ…ISQESSEEEQ (107 aa)). Ser2 carries the post-translational modification N-acetylserine. Lys7 bears the N6-acetyllysine mark. At Ser8 the chain carries ADP-ribosylserine. Ser9 is subject to ADP-ribosylserine; alternate. Ser9 is subject to Phosphoserine; alternate. At Lys15 the chain carries N6-acetyllysine; alternate. Residue Lys15 forms a Glycyl lysine isopeptide (Lys-Gly) (interchain with G-Cter in SUMO2); alternate linkage. Residues 15–24 (KQEKDGTEKR) are compositionally biased toward basic and acidic residues. Residues 21–31 (TEKRGRGRPRK) constitute a DNA-binding region (a.T hook 1). Arg26 carries the asymmetric dimethylarginine; alternate modification. Residue Arg26 is modified to Omega-N-methylarginine; alternate. Arg26 is modified (symmetric dimethylarginine; alternate). Ser36 bears the Phosphoserine; by HIPK2 and CDC2 mark. Thr39 is modified (phosphothreonine). Phosphoserine occurs at positions 44 and 49. Thr53 is subject to Phosphothreonine; by HIPK2 and CDC2. 2 DNA-binding regions (a.T hook) span residues 53-63 (TPKRPRGRPKG) and 78-89 (APGRKPRGRPKK). Positions 53-77 (TPKRPRGRPKGSKNKGAAKTRKVTT) are interaction with HIPK2. The segment covering 55 to 74 (KRPRGRPKGSKNKGAAKTRK) has biased composition (basic residues). Arg58 and Arg60 each carry asymmetric dimethylarginine; by PRMT6; alternate. Arg58 and Arg60 each carry omega-N-methylarginine; by PRMT6; alternate. A compositionally biased stretch (acidic residues) spans 93-107 (EEEEGISQESSEEEQ). Ser99, Ser102, and Ser103 each carry phosphoserine.

The protein belongs to the HMGA family. As to quaternary structure, interacts with HIPK2. Isoforms HMG-I and HMG-Y can be phosphorylated by HIPK2. Phosphorylation may modulate DNA-binding affinity. In terms of processing, methylation at Arg-58 is mutually exclusive with methylation at Arg-60.

Its subcellular location is the nucleus. It localises to the chromosome. Its function is as follows. HMG-I/Y bind preferentially to the minor groove of A+T rich regions in double-stranded DNA. It is suggested that these proteins could function in nucleosome phasing and in the 3'-end processing of mRNA transcripts. They are also involved in the transcription regulation of genes containing, or in close proximity to A+T-rich regions. This Mus musculus (Mouse) protein is High mobility group protein HMG-I/HMG-Y (Hmga1).